The following is an 850-amino-acid chain: Receptor-like serine/threonine-protein kinase SD1-8 (850 aa).

The N-terminal stretch at 1–26 is a signal peptide; the sequence is MRGLPNFYHSYTFFFFFLLILFPAYS. Topologically, residues 27–441 are extracellular; that stretch reads ISANTLSASE…LEDKRNRSAK (415 aa). The Bulb-type lectin domain occupies 31 to 153; sequence TLSASESLTI…KNSAPDGVLW (123 aa). N-linked (GlcNAc...) asparagine glycosylation is found at asparagine 43, asparagine 118, and asparagine 242. Positions 292-328 constitute an EGF-like domain; sequence PKDQCDEYKECGVYGYCDSNTSPVCNCIKGFKPRNPQ. 4 disulfide bridges follow: cysteine 296-cysteine 308, cysteine 302-cysteine 316, cysteine 378-cysteine 403, and cysteine 382-cysteine 388. A PAN domain is found at 347–428; the sequence is CGGGDGFVRL…GGQDLYVRLA (82 aa). Residues asparagine 387 and asparagine 437 are each glycosylated (N-linked (GlcNAc...) asparagine). Residues 442–462 traverse the membrane as a helical segment; that stretch reads IIGSSIGVSVLLLLSFIIFFL. Topologically, residues 463–850 are cytoplasmic; that stretch reads WKRKQKRSIL…QITVSVLDAR (388 aa). The Protein kinase domain maps to 526–807; sequence FSNANKLGQG…LMLGSESTTI (282 aa). ATP is bound by residues 532-540 and lysine 554; that span reads LGQGGFGIV. The caM-binding stretch occupies residues 615-632; that stretch reads SRNSKLNWQMRFDIINGI. The Proton acceptor role is filled by aspartate 651.

It belongs to the protein kinase superfamily. Ser/Thr protein kinase family. As to quaternary structure, interacts with PUB9, PUB13, PUB14 and PUB38. Expressed in the root-hypocotyl transition zone, at the base of lateral roots, axillary buds and pedicels.

It is found in the cell membrane. It catalyses the reaction L-seryl-[protein] + ATP = O-phospho-L-seryl-[protein] + ADP + H(+). The enzyme catalyses L-threonyl-[protein] + ATP = O-phospho-L-threonyl-[protein] + ADP + H(+). Functionally, involved in the regulation of cellular expansion and differentiation. This Arabidopsis thaliana (Mouse-ear cress) protein is Receptor-like serine/threonine-protein kinase SD1-8 (SD18).